Reading from the N-terminus, the 349-residue chain is Diacylglycerol O-acyltransferase 2B (349 aa).

Transmembrane regions (helical) follow at residues 44 to 64 and 114 to 134; these read ICLI…ILIM and YIMS…NFAT.

This sequence belongs to the diacylglycerol acyltransferase family.

It is found in the endoplasmic reticulum membrane. It carries out the reaction an acyl-CoA + a 1,2-diacyl-sn-glycerol = a triacyl-sn-glycerol + CoA. It participates in glycerolipid metabolism; triacylglycerol biosynthesis. Catalyzes the terminal and only committed step in triacylglycerol synthesis by using diacylglycerol and fatty acyl CoA as substrates. Required for storage lipid synthesis. The chain is Diacylglycerol O-acyltransferase 2B (DGAT2B) from Umbelopsis ramanniana (Oleaginous fungus).